A 328-amino-acid polypeptide reads, in one-letter code: MPLHHLTRFPRLELIGAPTPLEYLPRLSDYLGREIYIKRDDVTPIAMGGNKLRKLEFLVADALREGADTLITAGAIQSNHVRQTAAVAAKLGLHCVALLENPIGTTAENYLTNGNRLLLDLFNTQIEMCDALTDPDAQLQTLATRIEAQGFRPYVIPVGGSSALGAMGYVESALEIAQQCEEVVGLSSVVVASGSAGTHAGLAVGLEHLMPDVELIGVTVSRSVAEQKPKVIALQQAIAGQLALTATADIHLWDDYFAPGYGVPNDAGMEAVKLLASLEGVLLDPVYTGKAMAGLIDGISQKRFNDDGPSLFIHTGGAPALFAYHPHV.

Lysine 51 carries the N6-(pyridoxal phosphate)lysine modification.

It belongs to the ACC deaminase/D-cysteine desulfhydrase family. Homodimer. Requires pyridoxal 5'-phosphate as cofactor.

The enzyme catalyses D-cysteine + H2O = hydrogen sulfide + pyruvate + NH4(+) + H(+). Functionally, catalyzes the alpha,beta-elimination reaction of D-cysteine and of several D-cysteine derivatives. It could be a defense mechanism against D-cysteine. This Salmonella paratyphi B (strain ATCC BAA-1250 / SPB7) protein is D-cysteine desulfhydrase.